Consider the following 514-residue polypeptide: Cytochrome bd-II ubiquinol oxidase subunit 1 (514 aa).

Over 1-22 the chain is Cytoplasmic; that stretch reads MWDVIDLSRWQFALTALYHFLF. His-19 contributes to the heme binding site. A helical membrane pass occupies residues 23-42; that stretch reads VPLTLGLIFLLAIMETIYVV. The Periplasmic segment spans residues 43-94; the sequence is TGKTIYRDMTRFWGKLFGINFALGVATGLTMEFQFGTNWSFYSNYVGDIFGA. A helical membrane pass occupies residues 95 to 114; that stretch reads PLAMEALMAFFLESTFVGLF. At 115-129 the chain is on the cytoplasmic side; the sequence is FFGWQRLNKYQHLLV. Residues 130-149 form a helical membrane-spanning segment; it reads TWLVAFGSNLSALWILNANG. Topologically, residues 150–187 are periplasmic; it reads WMQYPTGAHFDIDTLRMEMTSFSELVFNPVSQVKFVHT. A heme-binding site is contributed by His-186. A helical transmembrane segment spans residues 188–207; it reads VMAGYVTGAMFIMAISAWYL. Residues 208–219 lie on the Cytoplasmic side of the membrane; that stretch reads LRGRERNVALRS. A helical transmembrane segment spans residues 220-239; sequence FAIGSVFGTLAIIGTLQLGD. At 240-392 the chain is on the periplasmic side; that stretch reads SSAYEVAQVQ…VAPVFWSFRI (153 aa). Met-393 contributes to the heme binding site. Residues 393–412 traverse the membrane as a helical segment; the sequence is MVGCGSLLLLVMLIALVQTL. The Cytoplasmic portion of the chain corresponds to 413-470; the sequence is RGKIDQHRWVLKMALWSLPLPWIAIEAGWFMTEFGRQPWAIQDILPTYSAHSALTTGQ. The helical transmembrane segment at 471 to 490 threads the bilayer; the sequence is LAFSLIMIVGLYTLFLIAEV. The Periplasmic portion of the chain corresponds to 491 to 514; it reads YLMQKYARLGPSAMQSEQPTQQQG.

It belongs to the cytochrome ubiquinol oxidase subunit 1 family. In terms of assembly, heterodimer of subunits I and II. Heme is required as a cofactor. Post-translationally, the N-terminus is blocked.

The protein localises to the cell inner membrane. It catalyses the reaction 2 a ubiquinol + O2 + n H(+)(in) = 2 a ubiquinone + 2 H2O + n H(+)(out). The protein operates within energy metabolism; oxidative phosphorylation. Its activity is regulated as follows. Inhibited by cyanide; is more sensitive to cyanide than cytochrome bd-I oxidase. Functionally, a terminal oxidase that catalyzes quinol-dependent, Na(+)-independent oxygen uptake. Prefers menadiol over other quinols although ubiquinol was not tested. Generates a proton motive force using protons and electrons from opposite sides of the membrane to generate H(2)O, transferring 1 proton/electron. This Escherichia coli (strain K12) protein is Cytochrome bd-II ubiquinol oxidase subunit 1 (appC).